Consider the following 232-residue polypeptide: MNKTIQLQDLGHKDYKATWDYQEQLFQNVLDIKIQNRREERQDQTPNYFLFVEHPHVYTLGKSGDLSNLLLSEKQLEAKGATFYKINRGGDITYHGPGQIVGYPILDLENFFTDIHKYLRLLEEAIILTLAEYNITGTRSEGETGVWLGVGTPFARKICALGVRASRWVTMHGFALNANADLGYFDNIIPCGIKGKAVTSLNVELGVEKVNEEEVKEKILKHFTQLFDCTVI.

Positions 43–231 (DQTPNYFLFV…HFTQLFDCTV (189 aa)) constitute a BPL/LPL catalytic domain. Substrate is bound by residues 88 to 95 (RGGDITYH), 160 to 162 (ALG), and 173 to 175 (GFA). The Acyl-thioester intermediate role is filled by Cys191.

The protein belongs to the LipB family.

It localises to the cytoplasm. The catalysed reaction is octanoyl-[ACP] + L-lysyl-[protein] = N(6)-octanoyl-L-lysyl-[protein] + holo-[ACP] + H(+). Its pathway is protein modification; protein lipoylation via endogenous pathway; protein N(6)-(lipoyl)lysine from octanoyl-[acyl-carrier-protein]: step 1/2. Functionally, catalyzes the transfer of endogenously produced octanoic acid from octanoyl-acyl-carrier-protein onto the lipoyl domains of lipoate-dependent enzymes. Lipoyl-ACP can also act as a substrate although octanoyl-ACP is likely to be the physiological substrate. This chain is Octanoyltransferase, found in Flavobacterium psychrophilum (strain ATCC 49511 / DSM 21280 / CIP 103535 / JIP02/86).